Reading from the N-terminus, the 97-residue chain is Type 1 phosphatases regulator YPI2 (97 aa).

A disordered region spans residues 1-97 (MNKKKTKICC…KMMEKKSNNT (97 aa)). Residues 43–53 (ENDKDLGFDER) show a composition bias toward basic and acidic residues. Residues 54 to 65 (RKRRVERRRRKL) are compositionally biased toward basic residues.

This sequence belongs to the YPI1 family.

It localises to the nucleus. Functionally, regulator of type 1 phosphatases which maintains protein phosphatase activity under strict control. The polypeptide is Type 1 phosphatases regulator YPI2 (YPI2) (Vanderwaltozyma polyspora (strain ATCC 22028 / DSM 70294 / BCRC 21397 / CBS 2163 / NBRC 10782 / NRRL Y-8283 / UCD 57-17) (Kluyveromyces polysporus)).